The sequence spans 241 residues: Probable transcriptional regulatory protein RALTA_A0859 (241 aa).

This sequence belongs to the TACO1 family.

It localises to the cytoplasm. The polypeptide is Probable transcriptional regulatory protein RALTA_A0859 (Cupriavidus taiwanensis (strain DSM 17343 / BCRC 17206 / CCUG 44338 / CIP 107171 / LMG 19424 / R1) (Ralstonia taiwanensis (strain LMG 19424))).